The primary structure comprises 355 residues: Probable dual-specificity RNA methyltransferase RlmN (355 aa).

Residue E107 is the Proton acceptor of the active site. In terms of domain architecture, Radical SAM core spans 113-341; that stretch reads TDKRLTVCVS…VSVRYSRGLE (229 aa). The cysteines at positions 120 and 346 are disulfide-linked. [4Fe-4S] cluster-binding residues include C127, C131, and C134. S-adenosyl-L-methionine-binding positions include 174–175, S204, 227–229, and N303; these read GE and SLH. C346 serves as the catalytic S-methylcysteine intermediate.

Belongs to the radical SAM superfamily. RlmN family. The cofactor is [4Fe-4S] cluster.

It is found in the cytoplasm. It carries out the reaction adenosine(2503) in 23S rRNA + 2 reduced [2Fe-2S]-[ferredoxin] + 2 S-adenosyl-L-methionine = 2-methyladenosine(2503) in 23S rRNA + 5'-deoxyadenosine + L-methionine + 2 oxidized [2Fe-2S]-[ferredoxin] + S-adenosyl-L-homocysteine. The catalysed reaction is adenosine(37) in tRNA + 2 reduced [2Fe-2S]-[ferredoxin] + 2 S-adenosyl-L-methionine = 2-methyladenosine(37) in tRNA + 5'-deoxyadenosine + L-methionine + 2 oxidized [2Fe-2S]-[ferredoxin] + S-adenosyl-L-homocysteine. Functionally, specifically methylates position 2 of adenine 2503 in 23S rRNA and position 2 of adenine 37 in tRNAs. This chain is Probable dual-specificity RNA methyltransferase RlmN, found in Trichormus variabilis (strain ATCC 29413 / PCC 7937) (Anabaena variabilis).